The chain runs to 52 residues: Ovomucoid (52 aa).

The Kazal-like domain maps to 2 to 52 (VDCSEYPKPACPKDYRPVCGSDNKTYGNKCNFCNAVVESNGTLTLNRFGKC). Intrachain disulfides connect Cys-4–Cys-34, Cys-12–Cys-31, and Cys-20–Cys-52. An N-linked (GlcNAc...) asparagine glycan is attached at Asn-41.

The protein localises to the secreted. The polypeptide is Ovomucoid (Coturnix delegorguei (Harlequin quail)).